A 373-amino-acid polypeptide reads, in one-letter code: Glutamate 5-kinase (373 aa).

Lys-15 is a binding site for ATP. Positions 55, 142, and 154 each coordinate substrate. ATP contacts are provided by residues 174-175 and 216-222; these read TD and TGGMVTK. Residues 281-359 enclose the PUA domain; sequence SGKIIVDDGA…GEIEAILGYK (79 aa).

It belongs to the glutamate 5-kinase family.

Its subcellular location is the cytoplasm. The catalysed reaction is L-glutamate + ATP = L-glutamyl 5-phosphate + ADP. It participates in amino-acid biosynthesis; L-proline biosynthesis; L-glutamate 5-semialdehyde from L-glutamate: step 1/2. In terms of biological role, catalyzes the transfer of a phosphate group to glutamate to form L-glutamate 5-phosphate. This Geobacter sulfurreducens (strain ATCC 51573 / DSM 12127 / PCA) protein is Glutamate 5-kinase.